The chain runs to 1019 residues: StAR-related lipid transfer protein 8 (1019 aa).

Disordered stretches follow at residues 92–122 (QPLL…KVKK) and 134–154 (SLRR…CLAT). The span at 100–115 (SPSNQPFLSPPQGQEG) shows a compositional bias: polar residues. The residue at position 108 (S108) is a Phosphoserine. Over residues 134–147 (SLRRKEKGDSRQTE) the composition is skewed to basic and acidic residues. R168 bears the Asymmetric dimethylarginine mark. S234 and S237 each carry phosphoserine. 2 disordered regions span residues 325-355 (MYPD…EVAT) and 406-482 (APAQ…VGAS). Residues 334–347 (KEEEEEEEEEEEEA) show a composition bias toward acidic residues. 2 stretches are compositionally biased toward polar residues: residues 418-430 (NSTA…SSLS) and 437-455 (ISDT…NSMN). 2 positions are modified to phosphoserine: S494 and S502. One can recognise a Rho-GAP domain in the interval 569-773 (PPLIHVQRTG…HMISDCKKLF (205 aa)). A disordered region spans residues 731 to 754 (DSSSPRIKSKRSLVGRPGPRDLSE). The START domain maps to 805-1013 (AQAAGVSLSL…RDSFPTLQAA (209 aa)).

In terms of assembly, binds both the SH2 and PTB domains of TNS1.

The protein localises to the cell junction. Its subcellular location is the focal adhesion. Functionally, accelerates GTPase activity of RHOA and CDC42, but not RAC1. Stimulates the hydrolysis of phosphatidylinositol 4,5-bisphosphate by PLCD1. In Mus musculus (Mouse), this protein is StAR-related lipid transfer protein 8 (Stard8).